The following is an 829-amino-acid chain: Ent-cassa-12,15-diene synthase (829 aa).

The interval 1–50 (MMLLGSPSSGGYGGKFAGASPAGGTTTMAPSAKQPSSRAPPPGITGGRND) is disordered. A compositionally biased stretch (polar residues) spans 23–37 (GGTTTMAPSAKQPSS). Asp-576, Asp-580, Asn-720, and Glu-728 together coordinate Mg(2+). The short motif at 576–580 (DDLFD) is the DDXXD motif element.

The protein belongs to the terpene synthase family. Requires Mg(2+) as cofactor. In terms of tissue distribution, expressed in roots and stems.

The catalysed reaction is ent-copalyl diphosphate = ent-cassa-12,15-diene + diphosphate. Its function is as follows. Involved in phytocassane phytoalexins biosynthesis. Catalyzes the conversion of ent-copalyl diphosphate to the phytoalexin precursor ent-cassa-12,15-diene. This Oryza sativa subsp. japonica (Rice) protein is Ent-cassa-12,15-diene synthase (KSL7).